Consider the following 333-residue polypeptide: Tetraacyldisaccharide 4'-kinase (333 aa).

Thr55–Thr62 is a binding site for ATP.

Belongs to the LpxK family.

The enzyme catalyses a lipid A disaccharide + ATP = a lipid IVA + ADP + H(+). Its pathway is glycolipid biosynthesis; lipid IV(A) biosynthesis; lipid IV(A) from (3R)-3-hydroxytetradecanoyl-[acyl-carrier-protein] and UDP-N-acetyl-alpha-D-glucosamine: step 6/6. Functionally, transfers the gamma-phosphate of ATP to the 4'-position of a tetraacyldisaccharide 1-phosphate intermediate (termed DS-1-P) to form tetraacyldisaccharide 1,4'-bis-phosphate (lipid IVA). This is Tetraacyldisaccharide 4'-kinase from Pectobacterium carotovorum subsp. carotovorum (strain PC1).